Reading from the N-terminus, the 119-residue chain is Ribonuclease P protein component (119 aa).

The protein belongs to the RnpA family. Consists of a catalytic RNA component (M1 or rnpB) and a protein subunit.

It carries out the reaction Endonucleolytic cleavage of RNA, removing 5'-extranucleotides from tRNA precursor.. In terms of biological role, RNaseP catalyzes the removal of the 5'-leader sequence from pre-tRNA to produce the mature 5'-terminus. It can also cleave other RNA substrates such as 4.5S RNA. The protein component plays an auxiliary but essential role in vivo by binding to the 5'-leader sequence and broadening the substrate specificity of the ribozyme. The protein is Ribonuclease P protein component of Borreliella burgdorferi (strain ATCC 35210 / DSM 4680 / CIP 102532 / B31) (Borrelia burgdorferi).